Here is a 119-residue protein sequence, read N- to C-terminus: Protein MGF 110-11L (119 aa).

Residues 1–17 (MKVLLGLLLGYSVLILA) form the signal peptide.

Belongs to the asfivirus MGF 110 family.

The sequence is that of Protein MGF 110-11L from Ornithodoros (relapsing fever ticks).